The sequence spans 317 residues: Putative pyridoxal kinase BUD17 (317 aa).

Residues S16 and Y128 each contribute to the substrate site. Residues 190 to 191 and 220 to 232 each bind ATP; these read TS and EIPKINAKFSGSG. D233 is a substrate binding site.

It belongs to the pyridoxine kinase family. A divalent metal cation is required as a cofactor.

It is found in the cytoplasm. It localises to the nucleus. The enzyme catalyses pyridoxal + ATP = pyridoxal 5'-phosphate + ADP + H(+). Functionally, required for synthesis of pyridoxal-5-phosphate from vitamin B6. Important for bud site selection. In Saccharomyces cerevisiae (strain ATCC 204508 / S288c) (Baker's yeast), this protein is Putative pyridoxal kinase BUD17 (BUD17).